The primary structure comprises 183 residues: NADH-quinone oxidoreductase subunit I (183 aa).

2 consecutive 4Fe-4S ferredoxin-type domains span residues 71–100 and 117–146; these read KRDEQGRENCTACGLCALSCPAEAITMKAA and EIYEINMLRCIFCGLCEEACPKDAIYLTTS. 8 residues coordinate [4Fe-4S] cluster: C80, C83, C86, C90, C126, C129, C132, and C136.

It belongs to the complex I 23 kDa subunit family. In terms of assembly, NDH-1 is composed of 14 different subunits. Subunits NuoA, H, J, K, L, M, N constitute the membrane sector of the complex. The cofactor is [4Fe-4S] cluster.

It localises to the cell inner membrane. It catalyses the reaction a quinone + NADH + 5 H(+)(in) = a quinol + NAD(+) + 4 H(+)(out). NDH-1 shuttles electrons from NADH, via FMN and iron-sulfur (Fe-S) centers, to quinones in the respiratory chain. The immediate electron acceptor for the enzyme in this species is believed to be ubiquinone. Couples the redox reaction to proton translocation (for every two electrons transferred, four hydrogen ions are translocated across the cytoplasmic membrane), and thus conserves the redox energy in a proton gradient. The chain is NADH-quinone oxidoreductase subunit I from Flavobacterium psychrophilum (strain ATCC 49511 / DSM 21280 / CIP 103535 / JIP02/86).